Here is a 244-residue protein sequence, read N- to C-terminus: MKKIVIKIGGNAATQLTPAFFDTIKFWQKQHYKIAIVHGGGDTISALMSQLNEPVQKINGIRFTTQNGINITKMALLGQVQPALLESCRVNGLSVIGLNAASDQLLTGHTIDQDTFGYVGNIHQVNTKLIHNLWEKNLIPIIAPMAITNSGQWLNVNADHAATALAKYLKADELYLLTDVSGVKIKGNVLQNLTSKTMEELQKKQMITGGMIPKVNSALFAARHGVRAVHITNTVTHPGTIVTI.

Substrate-binding positions include 40–41, arginine 62, and asparagine 155; that span reads GG.

Belongs to the acetylglutamate kinase family. ArgB subfamily.

It localises to the cytoplasm. The catalysed reaction is N-acetyl-L-glutamate + ATP = N-acetyl-L-glutamyl 5-phosphate + ADP. The protein operates within amino-acid biosynthesis; L-arginine biosynthesis; N(2)-acetyl-L-ornithine from L-glutamate: step 2/4. Catalyzes the ATP-dependent phosphorylation of N-acetyl-L-glutamate. In Leuconostoc mesenteroides subsp. mesenteroides (strain ATCC 8293 / DSM 20343 / BCRC 11652 / CCM 1803 / JCM 6124 / NCDO 523 / NBRC 100496 / NCIMB 8023 / NCTC 12954 / NRRL B-1118 / 37Y), this protein is Acetylglutamate kinase.